The following is a 118-amino-acid chain: UPF0102 protein PC1_0307 (118 aa).

It belongs to the UPF0102 family.

In Pectobacterium carotovorum subsp. carotovorum (strain PC1), this protein is UPF0102 protein PC1_0307.